Here is a 489-residue protein sequence, read N- to C-terminus: Cysteine--tRNA ligase (489 aa).

Cysteine 27 lines the Zn(2+) pocket. A 'HIGH' region motif is present at residues 29 to 39; it reads VTVYDLCHLGH. Cysteine 211, histidine 236, and glutamate 240 together coordinate Zn(2+). The short motif at 268–272 is the 'KMSKS' region element; the sequence is KMSKS. An ATP-binding site is contributed by lysine 271.

Belongs to the class-I aminoacyl-tRNA synthetase family. As to quaternary structure, monomer. Requires Zn(2+) as cofactor.

It is found in the cytoplasm. It catalyses the reaction tRNA(Cys) + L-cysteine + ATP = L-cysteinyl-tRNA(Cys) + AMP + diphosphate. In Prochlorococcus marinus (strain MIT 9301), this protein is Cysteine--tRNA ligase.